The sequence spans 531 residues: Acyl-CoA ligase azaF (531 aa).

188 to 199 (RLFSSGTTGLPK) is an AMP binding site. Residues 449-525 (EVEGVLRNHP…DAIPRNASGK (77 aa)) are AMP-binding.

It belongs to the ATP-dependent AMP-binding enzyme family.

Its pathway is secondary metabolite biosynthesis. Functionally, acyl-CoA ligase; part of the gene cluster that mediates the biosynthesis of azaphilones, a class of fungal metabolites characterized by a highly oxygenated pyrano-quinone bicyclic core and exhibiting a broad range of bioactivities. In the first step, the non-reducing polyketide synthase azaA forms the hexaketide precursor from successive condensations of five malonyl-CoA units, presumably with a simple acetyl-CoA starter unit. The reactive polyketide chain then undergoes a PT-mediated C2-C7 cyclization to afford the aromatic ring and is eventually released as an aldehyde through the R-domain. The putative ketoreductase azaE is proposed to catalyze the reduction of the terminal ketone resulting in the early culture product FK17-P2a. The monooxygenase azaH was demonstrated to be the only enzyme required to convert FK17-P2a to azanigerone E. AzaH first hydroxylates the benzaldehyde intermediate FK17-P2a at C4, which triggers the formation of the pyran-ring to afford azanigerone E. In parallel, the 2,4-dimethylhexanoyl chain is synthesized by the HR-PKS azaB and is proposed to be transferred to the C4-hydroxyl of azanigerone E by the acyltransferase azaD directly from the ACP domain of azaB. Alternatively, the 2,4-dimethyl-hexanoyl chain may be offloaded from the HR-PKS as a carboxylic acid and converted to an acyl-CoA by azaF. The resulting acyl-CoA molecule could then be taken up as a substrate by AzaD to form azanigerone B. To yield the carboxylic acid substituent in azanigerone A, the hydroxypropyl side chain of azanigerone B would need to undergo a C-C oxidative cleavage catalyzed by cytochrome P450 AzaI. AzaI is proposed to act on a vicinal diol that leads to a C-C bond scission either through an alkoxyradical intermediate or a peroxy complex. In the biosynthesis of azanigerone A, azanigerone B first undergoes hydroxylation at C10, possibly catalyzed by one of the two FAD-dependent monooxygenases encoded in the cluster, azaG or azaL, resulting in the vicinal diol azanigerone C. Oxidative cleavage of azanigerone C by azaI would yield the corresponding aldehyde derivative of azanigerone A. Finally, the dehydrogenase azaJ is proposed to convert the aldehyde functional group into the carboxylic acid, completing the conversion from azanigerone B to azanigerone A. Alternatively, the oxidation of aldehyde to carboxylic acid may be catalyzed by the same P450 enzyme azaI via consecutive oxidation or by endogenous alcohol dehydrogenase. In Aspergillus niger (strain ATCC 1015 / CBS 113.46 / FGSC A1144 / LSHB Ac4 / NCTC 3858a / NRRL 328 / USDA 3528.7), this protein is Acyl-CoA ligase azaF.